The primary structure comprises 293 residues: Pseudouridine-5'-phosphate glycosidase (293 aa).

E21 acts as the Proton donor in catalysis. Substrate is bound by residues K81 and V101. D130 contacts Mn(2+). 132–134 contributes to the substrate binding site; sequence SQD. K151 acts as the Nucleophile in catalysis.

The protein belongs to the pseudouridine-5'-phosphate glycosidase family. In terms of assembly, homotrimer. Requires Mn(2+) as cofactor.

The enzyme catalyses D-ribose 5-phosphate + uracil = psi-UMP + H2O. In terms of biological role, catalyzes the reversible cleavage of pseudouridine 5'-phosphate (PsiMP) to ribose 5-phosphate and uracil. Functions biologically in the cleavage direction, as part of a pseudouridine degradation pathway. In Thermosipho africanus (strain TCF52B), this protein is Pseudouridine-5'-phosphate glycosidase.